A 360-amino-acid chain; its full sequence is Protein Wnt-2 (360 aa).

Positions 1 to 25 (MNAPLAGIWPWLPLLLTWLAPEVSS) are cleaved as a signal peptide. 11 disulfide bridges follow: C76-C87, C127-C135, C137-C157, C206-C220, C208-C215, C278-C309, C294-C304, C308-C348, C324-C339, C326-C336, and C331-C332. Residue S212 is the site of O-palmitoleoyl serine; by PORCN attachment. N-linked (GlcNAc...) asparagine glycosylation occurs at N295.

This sequence belongs to the Wnt family. In terms of processing, palmitoleoylation is required for efficient binding to frizzled receptors. Depalmitoleoylation leads to Wnt signaling pathway inhibition.

It is found in the secreted. Its subcellular location is the extracellular space. The protein localises to the extracellular matrix. Ligand for members of the frizzled family of seven transmembrane receptors. Functions in the canonical Wnt signaling pathway that results in activation of transcription factors of the TCF/LEF family. Functions as a upstream regulator of FGF10 expression. Plays an important role in embryonic lung development. May contribute to embryonic brain development by regulating the proliferation of dopaminergic precursors and neurons. The polypeptide is Protein Wnt-2 (WNT2) (Loxodonta africana (African elephant)).